The primary structure comprises 151 residues: UPF0756 membrane protein Hore_21770 (151 aa).

5 helical membrane passes run 7-29, 49-69, 84-104, 110-130, and 131-151; these read LLIITILGFLARSRVLVIAGLLL, IEIGLIFLLMAILSSLVLSPV, TVAIIAGVLATKFNGMGLDLL, FILGIIMGSLVGIVFFGGIPV, and GPLMAAGIGAVLFKIIEIIKG.

The protein belongs to the UPF0756 family.

It is found in the cell membrane. The protein is UPF0756 membrane protein Hore_21770 of Halothermothrix orenii (strain H 168 / OCM 544 / DSM 9562).